The sequence spans 964 residues: Isoleucine--tRNA ligase (964 aa).

The 'HIGH' region signature appears at 66-76 (PYANGDIHIGH). An L-isoleucyl-5'-AMP-binding site is contributed by Glu596. The 'KMSKS' region signature appears at 637 to 641 (KMSKS). Residue Lys640 coordinates ATP. Zn(2+) is bound by residues Cys927, Cys930, Cys947, and Cys950.

Belongs to the class-I aminoacyl-tRNA synthetase family. IleS type 1 subfamily. As to quaternary structure, monomer. It depends on Zn(2+) as a cofactor.

It is found in the cytoplasm. It carries out the reaction tRNA(Ile) + L-isoleucine + ATP = L-isoleucyl-tRNA(Ile) + AMP + diphosphate. Its function is as follows. Catalyzes the attachment of isoleucine to tRNA(Ile). As IleRS can inadvertently accommodate and process structurally similar amino acids such as valine, to avoid such errors it has two additional distinct tRNA(Ile)-dependent editing activities. One activity is designated as 'pretransfer' editing and involves the hydrolysis of activated Val-AMP. The other activity is designated 'posttransfer' editing and involves deacylation of mischarged Val-tRNA(Ile). This chain is Isoleucine--tRNA ligase, found in Cupriavidus necator (strain ATCC 17699 / DSM 428 / KCTC 22496 / NCIMB 10442 / H16 / Stanier 337) (Ralstonia eutropha).